The chain runs to 263 residues: Receptor expression-enhancing protein 3-A (263 aa).

2 helical membrane-spanning segments follow: residues 2–22 (VSWI…PAYF) and 35–55 (YVRW…EAIA). Disordered stretches follow at residues 161-228 (GDET…SMRS) and 240-263 (YASL…AHHL). Acidic residues predominate over residues 199 to 214 (DDNTDEDVEVNSEDEV). Residues 242-251 (SLKHKPKKRP) show a composition bias toward basic residues.

It belongs to the DP1 family.

It localises to the endoplasmic reticulum membrane. Microtubule-binding protein required to ensure proper cell division and nuclear envelope reassembly by sequestering the endoplasmic reticulum away from chromosomes during mitosis. Probably acts by clearing the endoplasmic reticulum membrane from metaphase chromosomes. In Xenopus laevis (African clawed frog), this protein is Receptor expression-enhancing protein 3-A (reep3-a).